Reading from the N-terminus, the 209-residue chain is Uracil phosphoribosyltransferase (209 aa).

Residues R79, R104, and 131 to 139 each bind 5-phospho-alpha-D-ribose 1-diphosphate; that span reads DPMLATGAS. Uracil-binding positions include I194 and 199–201; that span reads GDA. 5-phospho-alpha-D-ribose 1-diphosphate is bound at residue D200.

The protein belongs to the UPRTase family. Mg(2+) is required as a cofactor.

The enzyme catalyses UMP + diphosphate = 5-phospho-alpha-D-ribose 1-diphosphate + uracil. The protein operates within pyrimidine metabolism; UMP biosynthesis via salvage pathway; UMP from uracil: step 1/1. Its activity is regulated as follows. Allosterically activated by GTP. Its function is as follows. Catalyzes the conversion of uracil and 5-phospho-alpha-D-ribose 1-diphosphate (PRPP) to UMP and diphosphate. This Staphylococcus aureus (strain JH1) protein is Uracil phosphoribosyltransferase.